A 65-amino-acid chain; its full sequence is MSLSPSERPDTVDRKLLDILVCPVTKGPLEFDPARQELISRGAKLAYPIRDGIPIMLPEEARKLG.

Belongs to the UPF0434 family.

The chain is UPF0434 protein Rpal_0270 from Rhodopseudomonas palustris (strain TIE-1).